A 92-amino-acid chain; its full sequence is DNA-directed RNA polymerase subunit Rpo5 (92 aa).

Belongs to the archaeal Rpo5/eukaryotic RPB5 RNA polymerase subunit family. As to quaternary structure, part of the RNA polymerase complex.

Its subcellular location is the cytoplasm. The catalysed reaction is RNA(n) + a ribonucleoside 5'-triphosphate = RNA(n+1) + diphosphate. In terms of biological role, DNA-dependent RNA polymerase (RNAP) catalyzes the transcription of DNA into RNA using the four ribonucleoside triphosphates as substrates. This chain is DNA-directed RNA polymerase subunit Rpo5, found in Methanopyrus kandleri (strain AV19 / DSM 6324 / JCM 9639 / NBRC 100938).